Reading from the N-terminus, the 381-residue chain is Alkanesulfonate monooxygenase (381 aa).

Belongs to the SsuD family. Homotetramer.

It carries out the reaction an alkanesulfonate + FMNH2 + O2 = an aldehyde + FMN + sulfite + H2O + 2 H(+). Its function is as follows. Catalyzes the desulfonation of aliphatic sulfonates. The sequence is that of Alkanesulfonate monooxygenase from Escherichia coli O1:K1 / APEC.